The following is a 443-amino-acid chain: Glutamyl-tRNA reductase (443 aa).

Residues 49–52, Ser-109, 114–116, and Gln-120 each bind substrate; these read TCNR and EQQ. The active-site Nucleophile is Cys-50. An NADP(+)-binding site is contributed by 189-194; that stretch reads GAGSMG.

The protein belongs to the glutamyl-tRNA reductase family. In terms of assembly, homodimer.

It catalyses the reaction (S)-4-amino-5-oxopentanoate + tRNA(Glu) + NADP(+) = L-glutamyl-tRNA(Glu) + NADPH + H(+). The protein operates within porphyrin-containing compound metabolism; protoporphyrin-IX biosynthesis; 5-aminolevulinate from L-glutamyl-tRNA(Glu): step 1/2. Catalyzes the NADPH-dependent reduction of glutamyl-tRNA(Glu) to glutamate 1-semialdehyde (GSA). This is Glutamyl-tRNA reductase from Mycobacteroides abscessus (strain ATCC 19977 / DSM 44196 / CCUG 20993 / CIP 104536 / JCM 13569 / NCTC 13031 / TMC 1543 / L948) (Mycobacterium abscessus).